The sequence spans 163 residues: Small ribosomal subunit protein bS18c (163 aa).

2 disordered regions span residues 1 to 54 (MYTS…PGDR) and 121 to 163 (ITGP…SSDC). The segment covering 7–48 (PFHKSKQTFHKSKQTFRKSKQTFRKFKQPFRKPKQPFRRRPR) has biased composition (basic residues). Over residues 140-163 (NSNRNLRNSNQTLRNNNRNLSSDC) the composition is skewed to low complexity.

It belongs to the bacterial ribosomal protein bS18 family. As to quaternary structure, part of the 30S ribosomal subunit.

The protein resides in the plastid. It is found in the chloroplast. The sequence is that of Small ribosomal subunit protein bS18c from Oryza nivara (Indian wild rice).